We begin with the raw amino-acid sequence, 412 residues long: Hyaluronidase-3 (412 aa).

The signal sequence occupies residues 1 to 22 (MIMHLGLMMVVGLTLCLMHGQA). 5 disulfides stabilise this stretch: cysteine 42–cysteine 332, cysteine 206–cysteine 221, cysteine 357–cysteine 368, cysteine 362–cysteine 396, and cysteine 398–cysteine 407. Asparagine 69 carries an N-linked (GlcNAc...) asparagine glycan. Catalysis depends on glutamate 129, which acts as the Proton donor. N-linked (GlcNAc...) asparagine glycosylation is present at asparagine 216. The EGF-like domain maps to 353–408 (AAMACSHQRCHGHGRCARKDPGQMEAFLHLQPDDSLGAWNSFRCHCYSGWAGPTCL).

It belongs to the glycosyl hydrolase 56 family. Post-translationally, N-glycosylated. Expressed in testis, epididymal tissue, epididymal luminal fluid (ELF), acrosome-intact (AI) sperm and caput (CAP), corpus (COR) and caudal (CAU) sperm. Higher expression in sperm than testis (at protein level). Liver, kidney, skin, brain, stomach and testis. Expressed mainly in granulosa cells of the ovaries. Expressed in small and large antral follicles. Not present in theca or stroma cells. Expressed in testis and liver. Expressed in testis and CAP, COR, and CAU epididymis tissue.

The protein resides in the secreted. It is found in the cell membrane. It localises to the cytoplasmic vesicle. The protein localises to the secretory vesicle. Its subcellular location is the acrosome. The protein resides in the endoplasmic reticulum. It is found in the early endosome. It carries out the reaction Random hydrolysis of (1-&gt;4)-linkages between N-acetyl-beta-D-glucosamine and D-glucuronate residues in hyaluronate.. Facilitates sperm penetration into the layer of cumulus cells surrounding the egg by digesting hyaluronic acid. Involved in induction of the acrosome reaction in the sperm. Involved in follicular atresia, the breakdown of immature ovarian follicles that are not selected to ovulate. Induces ovarian granulosa cell apoptosis, possibly via apoptotic signaling pathway involving CASP8 and CASP3 activation, and poly(ADP-ribose) polymerase (PARP) cleavage. Has no hyaluronidase activity in embryonic fibroblasts in vitro. Has no hyaluronidase activity in granulosa cells in vitro. In Mus musculus (Mouse), this protein is Hyaluronidase-3 (Hyal3).